The following is a 558-amino-acid chain: Deleted in azoospermia protein 2 (558 aa).

A compositionally biased stretch (polar residues) spans 1-10; the sequence is MSAANPETPN. A disordered region spans residues 1–27; that stretch reads MSAANPETPNSTISREASTQSSSAAAS. Over residues 11–27 the composition is skewed to low complexity; it reads STISREASTQSSSAAAS. The 76-residue stretch at 40–115 folds into the RRM domain; it reads NTVFVGGIDA…KKLKLGPAIR (76 aa). DAZ domains are found at residues 167-190, 191-214, 215-238, 239-262, 263-286, 287-310, 311-334, 335-358, 359-382, 383-406, 407-430, 431-454, 455-478, 479-502, and 503-526; these read AYSA…YNYQ, EYPT…YNYQ, PFPA…YNYQ, and AFPA…YNYQ.

The protein belongs to the RRM DAZ family. Forms a heterodimer with BOLL and DAZL. Interacts with PUM2, DAZAP1, DAZAP2, DZIP1 and DZIP3. In terms of tissue distribution, testis specific.

It is found in the cytoplasm. It localises to the nucleus. Functionally, RNA-binding protein that plays an essential role in spermatogenesis. May act by binding to the 3'-UTR of mRNAs and regulating their translation. This Homo sapiens (Human) protein is Deleted in azoospermia protein 2 (DAZ2).